A 315-amino-acid chain; its full sequence is Cysteine proteinase 1 (315 aa).

The first 13 residues, 1 to 13, serve as a signal peptide directing secretion; sequence MFTFILMFYIGYG. Positions 14-93 are cleaved as a propeptide — activation peptide; it reads IDFNTWVANN…KGEVRYLNIQ (80 aa). 2 disulfide bridges follow: cysteine 115/cysteine 161 and cysteine 152/cysteine 193. Residue cysteine 118 is part of the active site. Active-site residues include histidine 259 and asparagine 279.

Belongs to the peptidase C1 family.

The protein localises to the lysosome. With respect to regulation, inhibited by cysteine protease inhibitors ICP1 and ICP2. Functionally, cysteine protease which degrades matrix proteins such as collagen, laminin and fibronectin and thus is involved in the destruction of human tissue. Can abolish adhesion. May play an important role in pathogenicity. The protein is Cysteine proteinase 1 of Entamoeba histolytica (strain ATCC 30459 / HM-1:IMSS / ABRM).